Reading from the N-terminus, the 463-residue chain is Succinate--CoA ligase [ADP-forming] subunit beta, mitochondrial (463 aa).

Residues 1–52 constitute a mitochondrion transit peptide; it reads MAASMFYGRLVAVATLRNHRPRTAQRAAAQVLGSSGLFNNHGLQVQQQQQRN. The ATP-grasp domain occupies 61-288; that stretch reads MELLQEAGVS…SNSAYRQKKI (228 aa). At lysine 78 the chain carries N6-acetyllysine. Tyrosine 84 bears the Phosphotyrosine mark. Lysine 88 carries the post-translational modification N6-acetyllysine; alternate. The residue at position 88 (lysine 88) is an N6-succinyllysine; alternate. ATP-binding positions include lysine 98 and 105 to 107; that span reads GRG. An N6-acetyllysine mark is found at lysine 129, lysine 139, lysine 143, and lysine 216. Asparagine 258 and aspartate 272 together coordinate Mg(2+). Serine 279 bears the Phosphoserine mark. Substrate is bound at residue asparagine 323. Residue threonine 341 is modified to Phosphothreonine. The residue at position 368 (lysine 368) is an N6-acetyllysine. 380 to 382 lines the substrate pocket; that stretch reads GIM.

It belongs to the succinate/malate CoA ligase beta subunit family. ATP-specific subunit beta subfamily. In terms of assembly, heterodimer of an alpha and a beta subunit. The beta subunit determines specificity for ATP. Interacts with ALAS2. Requires Mg(2+) as cofactor. Widely expressed. Not expressed in liver and lung.

It is found in the mitochondrion. The enzyme catalyses succinate + ATP + CoA = succinyl-CoA + ADP + phosphate. It participates in carbohydrate metabolism; tricarboxylic acid cycle; succinate from succinyl-CoA (ligase route): step 1/1. With respect to regulation, inhibited by itaconate. Its function is as follows. ATP-specific succinyl-CoA synthetase functions in the citric acid cycle (TCA), coupling the hydrolysis of succinyl-CoA to the synthesis of ATP and thus represents the only step of substrate-level phosphorylation in the TCA. The beta subunit provides nucleotide specificity of the enzyme and binds the substrate succinate, while the binding sites for coenzyme A and phosphate are found in the alpha subunit. This is Succinate--CoA ligase [ADP-forming] subunit beta, mitochondrial from Homo sapiens (Human).